The chain runs to 116 residues: Phosphoribosyl-AMP cyclohydrolase (116 aa).

D82 serves as a coordination point for Mg(2+). C83 serves as a coordination point for Zn(2+). Positions 84 and 86 each coordinate Mg(2+). Residues C99 and C106 each coordinate Zn(2+).

Belongs to the PRA-CH family. In terms of assembly, homodimer. Mg(2+) serves as cofactor. The cofactor is Zn(2+).

It localises to the cytoplasm. The catalysed reaction is 1-(5-phospho-beta-D-ribosyl)-5'-AMP + H2O = 1-(5-phospho-beta-D-ribosyl)-5-[(5-phospho-beta-D-ribosylamino)methylideneamino]imidazole-4-carboxamide. It functions in the pathway amino-acid biosynthesis; L-histidine biosynthesis; L-histidine from 5-phospho-alpha-D-ribose 1-diphosphate: step 3/9. Its function is as follows. Catalyzes the hydrolysis of the adenine ring of phosphoribosyl-AMP. The chain is Phosphoribosyl-AMP cyclohydrolase from Saccharopolyspora erythraea (strain ATCC 11635 / DSM 40517 / JCM 4748 / NBRC 13426 / NCIMB 8594 / NRRL 2338).